A 123-amino-acid chain; its full sequence is Small ribosomal subunit protein uS12 (123 aa).

Asp-89 is subject to 3-methylthioaspartic acid. The interval 100 to 123 is disordered; sequence GSLDTSGVKGRNQGRSKYGTKKPK. The span at 111–123 shows a compositional bias: basic residues; that stretch reads NQGRSKYGTKKPK.

This sequence belongs to the universal ribosomal protein uS12 family. Part of the 30S ribosomal subunit. Contacts proteins S8 and S17. May interact with IF1 in the 30S initiation complex.

Functionally, with S4 and S5 plays an important role in translational accuracy. Its function is as follows. Interacts with and stabilizes bases of the 16S rRNA that are involved in tRNA selection in the A site and with the mRNA backbone. Located at the interface of the 30S and 50S subunits, it traverses the body of the 30S subunit contacting proteins on the other side and probably holding the rRNA structure together. The combined cluster of proteins S8, S12 and S17 appears to hold together the shoulder and platform of the 30S subunit. This chain is Small ribosomal subunit protein uS12, found in Pseudomonas syringae pv. syringae (strain B728a).